The primary structure comprises 366 residues: Aminomethyltransferase (366 aa).

This sequence belongs to the GcvT family. In terms of assembly, the glycine cleavage system is composed of four proteins: P, T, L and H.

The enzyme catalyses N(6)-[(R)-S(8)-aminomethyldihydrolipoyl]-L-lysyl-[protein] + (6S)-5,6,7,8-tetrahydrofolate = N(6)-[(R)-dihydrolipoyl]-L-lysyl-[protein] + (6R)-5,10-methylene-5,6,7,8-tetrahydrofolate + NH4(+). Functionally, the glycine cleavage system catalyzes the degradation of glycine. The sequence is that of Aminomethyltransferase from Bacillus cereus (strain 03BB102).